Consider the following 365-residue polypeptide: MTAPDSTLDPKLKKLIRQDVQSMHAYAIQESSGMVKLDAMENPHRLPAGLQAELGQRLGALALNRYPDGRVNDLRRALADYAQMPEGFDIMLGNGSDELIALLALACDVPGGSVLAPLPGFVMYAMSAQLQGLKFIGVDLTPDFELDEAAMLAAIAEHKPSITYLAYPNNPTANLWDDAVIENIINAVGEQGGLVVIDEAYQPFASKSYAGRMARHSHVLLMRTLSKFGLAGVRLGYMMGPKALIAEIDKVRPPYNISVLNYECALFALEHREVFAAQAQDVVAQRAVLFNALSALPGVKAWHSDANMILIRVPDAARAFEGLRNRKVLIKNISKMHPLLANCLRLTVGTAEENAQLLAALEPSL.

Lys227 carries the N6-(pyridoxal phosphate)lysine modification.

This sequence belongs to the class-II pyridoxal-phosphate-dependent aminotransferase family. Histidinol-phosphate aminotransferase subfamily. As to quaternary structure, homodimer. It depends on pyridoxal 5'-phosphate as a cofactor.

The enzyme catalyses L-histidinol phosphate + 2-oxoglutarate = 3-(imidazol-4-yl)-2-oxopropyl phosphate + L-glutamate. Its pathway is amino-acid biosynthesis; L-histidine biosynthesis; L-histidine from 5-phospho-alpha-D-ribose 1-diphosphate: step 7/9. This chain is Histidinol-phosphate aminotransferase, found in Polaromonas naphthalenivorans (strain CJ2).